The chain runs to 305 residues: Dihydroorotate dehydrogenase B (NAD(+)), catalytic subunit (305 aa).

FMN contacts are provided by residues serine 23 and 47-48 (KG). Substrate contacts are provided by residues lysine 47 and 71–75 (NAIGL). Residues asparagine 101 and asparagine 129 each contribute to the FMN site. Asparagine 129 is a binding site for substrate. Cysteine 132 (nucleophile) is an active-site residue. Residues lysine 167 and isoleucine 193 each coordinate FMN. 194 to 195 (NT) serves as a coordination point for substrate. FMN is bound by residues glycine 219, 245–246 (GG), and 267–268 (GT).

The protein belongs to the dihydroorotate dehydrogenase family. Type 1 subfamily. As to quaternary structure, heterotetramer of 2 PyrK and 2 PyrD type B subunits. FMN is required as a cofactor.

The protein localises to the cytoplasm. The catalysed reaction is (S)-dihydroorotate + NAD(+) = orotate + NADH + H(+). The protein operates within pyrimidine metabolism; UMP biosynthesis via de novo pathway; orotate from (S)-dihydroorotate (NAD(+) route): step 1/1. Its function is as follows. Catalyzes the conversion of dihydroorotate to orotate with NAD(+) as electron acceptor. This chain is Dihydroorotate dehydrogenase B (NAD(+)), catalytic subunit (pyrD), found in Geobacter metallireducens (strain ATCC 53774 / DSM 7210 / GS-15).